A 214-amino-acid chain; its full sequence is Auxin-binding protein ABP20 (214 aa).

Residues 1-23 form the signal peptide; that stretch reads MPQATMIFPILFTFFLLLSSSNA. C29 and C44 are joined by a disulfide. The 147-residue stretch at 58–204 folds into the Cupin type-1 domain; that stretch reads SGLGIAGNTS…TTFLDAAQIK (147 aa). An N-linked (GlcNAc...) asparagine glycan is attached at N65. H106, H108, E113, and H152 together coordinate Mn(2+).

The protein belongs to the germin family. Interacts with ABP19.

It localises to the secreted. It is found in the extracellular space. The protein localises to the apoplast. Its subcellular location is the cell wall. Probable receptor for the plant growth-promoting hormone auxin. The protein is Auxin-binding protein ABP20 (ABP20) of Prunus persica (Peach).